The primary structure comprises 76 residues: MGGISIWQLLIIVAIIVLLFGTKKLRTLGTDLGESVKGFKKAMADDKSQPQDASFEKVEAKEAASTEQKAKEKEQA.

The helical transmembrane segment at 1 to 21 threads the bilayer; that stretch reads MGGISIWQLLIIVAIIVLLFG. The disordered stretch occupies residues 43 to 76; the sequence is MADDKSQPQDASFEKVEAKEAASTEQKAKEKEQA.

This sequence belongs to the TatA/E family. In terms of assembly, the Tat system comprises two distinct complexes: a TatABC complex, containing multiple copies of TatA, TatB and TatC subunits, and a separate TatA complex, containing only TatA subunits. Substrates initially bind to the TatABC complex, which probably triggers association of the separate TatA complex to form the active translocon.

The protein localises to the cell inner membrane. In terms of biological role, part of the twin-arginine translocation (Tat) system that transports large folded proteins containing a characteristic twin-arginine motif in their signal peptide across membranes. TatA could form the protein-conducting channel of the Tat system. The sequence is that of Sec-independent protein translocase protein TatA from Actinobacillus pleuropneumoniae serotype 5b (strain L20).